The following is a 353-amino-acid chain: tRNA pseudouridine synthase B (353 aa).

The active-site Nucleophile is the D39.

The protein belongs to the pseudouridine synthase TruB family. Type 1 subfamily.

It carries out the reaction uridine(55) in tRNA = pseudouridine(55) in tRNA. In terms of biological role, responsible for synthesis of pseudouridine from uracil-55 in the psi GC loop of transfer RNAs. The polypeptide is tRNA pseudouridine synthase B (Wolbachia pipientis subsp. Culex pipiens (strain wPip)).